The chain runs to 226 residues: ATP synthase subunit a (226 aa).

5 helical membrane-spanning segments follow: residues 20 to 40, 74 to 94, 100 to 120, 158 to 180, and 197 to 217; these read LNWLSTFLGLLLIPFSFWLLP, FISLFSLIMFNNFLGLFPYIF, LTLTLALAFPLWLSFMLYGWI, LAVRLTANMIAGHLLLTLLGNTG, and IALLVLESAVAIIQSYVFAVL.

The protein belongs to the ATPase A chain family. F-type ATPases have 2 components, CF(1) - the catalytic core - and CF(0) - the membrane proton channel. CF(1) has five subunits: alpha(3), beta(3), gamma(1), delta(1), epsilon(1). CF(0) has three main subunits: a, b and c.

The protein resides in the mitochondrion inner membrane. In terms of biological role, mitochondrial membrane ATP synthase (F(1)F(0) ATP synthase or Complex V) produces ATP from ADP in the presence of a proton gradient across the membrane which is generated by electron transport complexes of the respiratory chain. F-type ATPases consist of two structural domains, F(1) - containing the extramembraneous catalytic core and F(0) - containing the membrane proton channel, linked together by a central stalk and a peripheral stalk. During catalysis, ATP synthesis in the catalytic domain of F(1) is coupled via a rotary mechanism of the central stalk subunits to proton translocation. Key component of the proton channel; it may play a direct role in the translocation of protons across the membrane. This Anopheles quadrimaculatus (Common malaria mosquito) protein is ATP synthase subunit a (ATP6).